Reading from the N-terminus, the 359-residue chain is Alpha-ketoglutarate-dependent dioxygenase cnsM (359 aa).

A substrate-binding site is contributed by histidine 120. 2 residues coordinate Fe cation: histidine 158 and aspartate 160. Threonine 186 lines the 2-oxoglutarate pocket. Histidine 311 provides a ligand contact to Fe cation. 2-oxoglutarate-binding residues include arginine 323 and arginine 327. Arginine 327 provides a ligand contact to substrate.

Belongs to the TfdA dioxygenase family. Requires Fe(2+) as cofactor.

Its pathway is alkaloid biosynthesis. In terms of biological role, alpha-ketoglutarate-dependent dioxygenase; part of the gene cluster that mediates the biosynthesis of communesins, a prominent class of indole alkaloids with great potential as pharmaceuticals. Communesins are biosynthesized by the coupling of tryptamine and aurantioclavine, two building blocks derived from L-tryptophan. The L-tryptophan decarboxylase cnsB converts L-tryptophan to tryptamine, whereas the tryptophan dimethylallyltransferase cnsF converts L-tryptophan to 4-dimethylallyl tryptophan which is further transformed to aurantioclavine by the aurantioclavine synthase cnsA, probably aided by the catalase cnsD. The cytochrome P450 monooxygenase cnsC catalyzes the heterodimeric coupling between the two different indole moieties, tryptamine and aurantioclavine, to construct vicinal quaternary stereocenters and yield the heptacyclic communesin scaffold. The O-methyltransferase cnsE then methylates the communesin scaffold to produce communesin K, the simplest characterized communesin that contains the heptacyclic core. The dioxygenase cnsJ converts communesin K into communesin I. Acylation to introduce the hexadienyl group at position N16 of communesin I by the acyltransferase cnsK leads to the production of communesin B. The hexadienyl group is produced by the highly reducing polyketide synthase cnsI, before being hydrolytically removed from cnsI by the serine hydrolase cnsH, converted into hexadienyl-CoA by the CoA ligase cnsG, and then transferred to communesin I by cnsK. Surprisingly, cnsK may also be a promiscuous acyltransferase that can tolerate a range of acyl groups, including acetyl-, propionyl-, and butyryl-CoA, which lead to communesins A, G and H respectively. The roles of the alpha-ketoglutarate-dependent dioxygenases cnsM and cnsP have still to be determined. This is Alpha-ketoglutarate-dependent dioxygenase cnsM from Penicillium expansum (Blue mold rot fungus).